The following is a 505-amino-acid chain: Trans-cinnamate 4-monooxygenase C4H2 (505 aa).

2 consecutive short sequence motifs (nuclear localization signal) follow at residues 161-168 (VKKMKESN) and 247-254 (EKRLKLFK). Cys447 serves as a coordination point for heme.

The protein belongs to the cytochrome P450 family. Heme serves as cofactor.

The protein localises to the nucleus. It carries out the reaction (E)-cinnamate + reduced [NADPH--hemoprotein reductase] + O2 = (E)-4-coumarate + oxidized [NADPH--hemoprotein reductase] + H2O + H(+). The protein operates within phenylpropanoid metabolism; trans-4-coumarate biosynthesis; trans-4-coumarate from trans-cinnamate: step 1/1. Component of the floral volatile benzenoid/phenylpropanoid (FVBP) biosynthetic pathway that controls carbon flux to pigments essential for pollination or UV protection, to numerous pytoalexins synthesized by plants when challenged by pathogens, and to lignins. The chain is Trans-cinnamate 4-monooxygenase C4H2 from Petunia hybrida (Petunia).